A 578-amino-acid polypeptide reads, in one-letter code: 2-succinyl-5-enolpyruvyl-6-hydroxy-3-cyclohexene-1-carboxylate synthase (578 aa).

It belongs to the TPP enzyme family. MenD subfamily. Homodimer. The cofactor is Mg(2+). Requires Mn(2+) as cofactor. Thiamine diphosphate is required as a cofactor.

The catalysed reaction is isochorismate + 2-oxoglutarate + H(+) = 5-enolpyruvoyl-6-hydroxy-2-succinyl-cyclohex-3-ene-1-carboxylate + CO2. Its pathway is quinol/quinone metabolism; 1,4-dihydroxy-2-naphthoate biosynthesis; 1,4-dihydroxy-2-naphthoate from chorismate: step 2/7. It functions in the pathway quinol/quinone metabolism; menaquinone biosynthesis. Catalyzes the thiamine diphosphate-dependent decarboxylation of 2-oxoglutarate and the subsequent addition of the resulting succinic semialdehyde-thiamine pyrophosphate anion to isochorismate to yield 2-succinyl-5-enolpyruvyl-6-hydroxy-3-cyclohexene-1-carboxylate (SEPHCHC). In Bacillus velezensis (strain DSM 23117 / BGSC 10A6 / LMG 26770 / FZB42) (Bacillus amyloliquefaciens subsp. plantarum), this protein is 2-succinyl-5-enolpyruvyl-6-hydroxy-3-cyclohexene-1-carboxylate synthase.